The following is a 1387-amino-acid chain: DNA-directed RNA polymerase subunit beta' (1387 aa).

Zn(2+) contacts are provided by Cys-70, Cys-72, Cys-85, and Cys-88. Mg(2+) contacts are provided by Asp-461, Asp-463, and Asp-465. 4 residues coordinate Zn(2+): Cys-808, Cys-882, Cys-889, and Cys-892. The disordered stretch occupies residues 1367-1387; the sequence is QDEAKGVGQETPRLSGQEAAE.

Belongs to the RNA polymerase beta' chain family. In terms of assembly, the RNAP catalytic core consists of 2 alpha, 1 beta, 1 beta' and 1 omega subunit. When a sigma factor is associated with the core the holoenzyme is formed, which can initiate transcription. Mg(2+) serves as cofactor. Zn(2+) is required as a cofactor.

It carries out the reaction RNA(n) + a ribonucleoside 5'-triphosphate = RNA(n+1) + diphosphate. In terms of biological role, DNA-dependent RNA polymerase catalyzes the transcription of DNA into RNA using the four ribonucleoside triphosphates as substrates. The protein is DNA-directed RNA polymerase subunit beta' of Granulibacter bethesdensis (strain ATCC BAA-1260 / CGDNIH1).